A 997-amino-acid polypeptide reads, in one-letter code: MAGNDTCNNSCDVKTARLWRDAALRSRKLRSSLRQLTLSCVDKRKLILPADLGDVEVLNLGNNSLEEVPDGLQSLSAGNLHVLILRRNKFLNVPTAVYHLGRLTELDISYNRLSCLTEAVGLLGKLKKLCLSHNQLRTLPRQLGMLVDLEELDVSFNQITHLPDTMQGLPSLRTLDLDHNELCSFPQQLFHVPALEELDFSGNKMLGSLPEGIRSMQSLKILWLSSTSLCLLPDSICELVNLESLMLDNNNLHTLPEGFGALQKLKMLNVSSNAFQDFPVPLLQLVDLEELYMSRNRLVVLPEVISCMTKLVTLWLDNNRIRYLPDSIVELSFLEELVLQGNQIAILPDDFGKLSKVNIWKIKDNPLIQPPYEVCMKGISYIAAYQKELAHSQPAVKPRLKLVLLGLKDAGKTLLRQCLTDEQNTSTLVQGYKGIEITNWTADAERGLAFIVYDLAGDQSYDIIKPFFFSPGALYILVVNLKSYVCKHFYTHVGYFIHLITSKVPHAVVCIVGTHIDLCNEKELEEKCLDIHHQIAVQEKRDSETLQTLIQTVDKALSQDFDFRASNPHSAFYGVSDKNLRRKKTHFQYLMNSRLQILSPVLCVSCLDFSNIKRLREKLLSVAEHREIFPNLHRVLPKSWQMLEELHFKPQELWLTWWDSARLGLQAGLTEDRMQSALSFLHESGKLLYFEDNQTLKEYVFHNLTKLIDILNVFFQRDASVLFAKLTSDATADETKVTQFHHYVEGFLLHGLLPTHIIRSLLKPHIKTHQDLQLILELLEKMGLCYCINKPKNKLLNGATVWYKFPCYVKNEAPHAEAWINGTNISEPCLAVEQLQIEYSFPFIFPPGLFARFSVQINSHIVHRSDSKFQIFAYRGKVPVVVSFQPARGALQPGILSIASHASLPNIWTAWQAITPLVEELNALLQEWPSLYYTVHVLCSKCLKRGSPNPHPFPGELLSQPRPDGVTELICPKNGSERLNVSLVYPPTPTMISPCSK.

LRR repeat units follow at residues 32–53 (SLRQLTLSCVDKRKLILPADLG), 54–76 (DVEVLNLGNNSLEEVPDGLQSLS), 79–100 (NLHVLILRRNKFLNVPTAVYHL), 102–123 (RLTELDISYNRLSCLTEAVGLL), 125–146 (KLKKLCLSHNQLRTLPRQLGML), 148–170 (DLEELDVSFNQITHLPDTMQGLP), 171–192 (SLRTLDLDHNELCSFPQQLFHV), 194–216 (ALEELDFSGNKMLGSLPEGIRSM), 218–239 (SLKILWLSSTSLCLLPDSICEL), 241–262 (NLESLMLDNNNLHTLPEGFGAL), 264–286 (KLKMLNVSSNAFQDFPVPLLQLV), 287–308 (DLEELYMSRNRLVVLPEVISCM), 310–331 (KLVTLWLDNNRIRYLPDSIVEL), and 333–354 (FLEELVLQGNQIAILPDDFGKL). One can recognise a Roc domain in the interval 393-626 (QPAVKPRLKL…EKLLSVAEHR (234 aa)). The region spanning 637–861 (PKSWQMLEEL…RFSVQINSHI (225 aa)) is the COR domain.

It localises to the cytoplasm. Functionally, probable GTP-binding protein. Functions in innate immunity and more specifically the inflammatory response as a regulator of the Toll-like receptor TLR2 and TLR4 signaling pathways. In Xenopus tropicalis (Western clawed frog), this protein is Malignant fibrous histiocytoma-amplified sequence 1 homolog (mfhas1).